A 70-amino-acid polypeptide reads, in one-letter code: Prokaryotic ubiquitin-like protein UBact (70 aa).

Composition is skewed to basic and acidic residues over residues 1 to 15 (MPDQ…RKQG) and 24 to 50 (TRHD…RDPG). The disordered stretch occupies residues 1–70 (MPDQRQQERS…RQQRREQSGE (70 aa)). Glu-70 is covalently cross-linked (Isoglutamyl lysine isopeptide (Glu-Lys) (interchain with K-? in acceptor proteins)).

It belongs to the ubiquitin-like protein UBact family.

In terms of biological role, may function as a protein modifier covalently attached to lysine residues of substrate proteins. This may serve to target the modified proteins for degradation by proteasomes. This is Prokaryotic ubiquitin-like protein UBact from Terrybacteria sp. (strain RIFCSPHIGHO2_01_FULL_58_15).